Here is a 751-residue protein sequence, read N- to C-terminus: Ribosomal RNA large subunit methyltransferase K/L (751 aa).

The THUMP domain occupies 44 to 155; it reads LAYRTCLWSR…KNKLVLSIDL (112 aa).

This sequence belongs to the methyltransferase superfamily. RlmKL family.

The protein resides in the cytoplasm. It catalyses the reaction guanosine(2445) in 23S rRNA + S-adenosyl-L-methionine = N(2)-methylguanosine(2445) in 23S rRNA + S-adenosyl-L-homocysteine + H(+). The enzyme catalyses guanosine(2069) in 23S rRNA + S-adenosyl-L-methionine = N(2)-methylguanosine(2069) in 23S rRNA + S-adenosyl-L-homocysteine + H(+). Specifically methylates the guanine in position 2445 (m2G2445) and the guanine in position 2069 (m7G2069) of 23S rRNA. The polypeptide is Ribosomal RNA large subunit methyltransferase K/L (Cellvibrio japonicus (strain Ueda107) (Pseudomonas fluorescens subsp. cellulosa)).